Reading from the N-terminus, the 1385-residue chain is Coiled-coil domain-containing protein 7 (1385 aa).

The stretch at 299-330 (LDAEYKQMQCDFQLLSEEKLVLENELQKLKDK) forms a coiled coil. A disordered region spans residues 329–364 (DKEKTKPTNNRTKKAVKTVKKKDKGKSEDSEKKMSP). Residues 339–352 (RTKKAVKTVKKKDK) show a composition bias toward basic residues. The segment covering 353-364 (GKSEDSEKKMSP) has biased composition (basic and acidic residues). Positions 374–411 (LDQVQKVARLEIENKVLQEQLKQALQEAEKAKHQLNYF) form a coiled coil. Disordered regions lie at residues 422–545 (GKTE…SKEV), 572–752 (TESK…EPNE), and 809–834 (TKKLPREKRHSTHDEESGENPMLKHQ). The segment covering 425–436 (ETTMQVGNSQTK) has biased composition (polar residues). 2 stretches are compositionally biased toward basic and acidic residues: residues 437 to 455 (VKGEDSKNIPLEKETRKSL) and 481 to 490 (LIEKSSEKKR). 3 stretches are compositionally biased toward polar residues: residues 493–503 (PAISDLSQILK), 511–528 (LESSNEVSVAENQSYKSP), and 536–545 (LTTVSSSKEV). The segment covering 573-589 (ESKKADVSEEQLQKMTE) has biased composition (basic and acidic residues). A compositionally biased stretch (polar residues) spans 654-664 (RIQSETKNLKA). Basic and acidic residues-rich tracts occupy residues 665–676 (TRNESFHSHNDV) and 685–697 (QDTKSKTEVEVKK). Residues 701–711 (FQDNQLSTHNE) are compositionally biased toward polar residues. Positions 712–726 (VPNERLVVEHQESLS) are enriched in basic and acidic residues.

Expressed in epithelium of normal cervix and cervical cancer. Overexpressed in early and interim cervical cancer.

May play a role in tumorigenesis. This Homo sapiens (Human) protein is Coiled-coil domain-containing protein 7 (CCDC7).